The following is a 38-amino-acid chain: Large ribosomal subunit protein bL36 (38 aa).

It belongs to the bacterial ribosomal protein bL36 family.

The sequence is that of Large ribosomal subunit protein bL36 from Acinetobacter baylyi (strain ATCC 33305 / BD413 / ADP1).